We begin with the raw amino-acid sequence, 487 residues long: Protein nucleotidyltransferase YdiU (487 aa).

The ATP site is built by Gly90, Gly92, Arg93, Lys113, Asp125, Gly126, Arg176, and Arg183. Asp252 serves as the catalytic Proton acceptor. Residues Asn253 and Asp262 each coordinate Mg(2+). Residue Asp262 coordinates ATP.

It belongs to the SELO family. Mg(2+) serves as cofactor. It depends on Mn(2+) as a cofactor.

The enzyme catalyses L-seryl-[protein] + ATP = 3-O-(5'-adenylyl)-L-seryl-[protein] + diphosphate. The catalysed reaction is L-threonyl-[protein] + ATP = 3-O-(5'-adenylyl)-L-threonyl-[protein] + diphosphate. It carries out the reaction L-tyrosyl-[protein] + ATP = O-(5'-adenylyl)-L-tyrosyl-[protein] + diphosphate. It catalyses the reaction L-histidyl-[protein] + UTP = N(tele)-(5'-uridylyl)-L-histidyl-[protein] + diphosphate. The enzyme catalyses L-seryl-[protein] + UTP = O-(5'-uridylyl)-L-seryl-[protein] + diphosphate. The catalysed reaction is L-tyrosyl-[protein] + UTP = O-(5'-uridylyl)-L-tyrosyl-[protein] + diphosphate. Its function is as follows. Nucleotidyltransferase involved in the post-translational modification of proteins. It can catalyze the addition of adenosine monophosphate (AMP) or uridine monophosphate (UMP) to a protein, resulting in modifications known as AMPylation and UMPylation. The protein is Protein nucleotidyltransferase YdiU of Ectopseudomonas mendocina (strain ymp) (Pseudomonas mendocina).